Here is a 502-residue protein sequence, read N- to C-terminus: Cytochrome c-552 (502 aa).

Positions 1 to 25 are cleaved as a signal peptide; it reads MKYLTKSRVIATIAMLGCLSVSAWA. His105 contributes to the heme c binding site. 3 residues coordinate heme: Cys133, Cys136, and Lys137. Residues Cys171, Cys174, His175, Cys220, Cys223, and His224 each contribute to the heme c site. Glu226, Tyr227, Lys271, and Gln273 together coordinate Ca(2+). Tyr227 is a substrate binding site. Substrate is bound at residue His274. Residues His285, Cys292, Cys295, His296, His311, Cys324, Cys327, His328, and His403 each contribute to the heme c site. The segment at 481-502 is disordered; sequence RERGLLPEVTPKSVTTPKVDAK.

Belongs to the cytochrome c-552 family. The cofactor is Ca(2+). Requires heme c as cofactor.

The protein resides in the periplasm. The catalysed reaction is 6 Fe(III)-[cytochrome c] + NH4(+) + 2 H2O = 6 Fe(II)-[cytochrome c] + nitrite + 8 H(+). It participates in nitrogen metabolism; nitrate reduction (assimilation). Catalyzes the reduction of nitrite to ammonia, consuming six electrons in the process. The sequence is that of Cytochrome c-552 from Haemophilus ducreyi (strain 35000HP / ATCC 700724).